We begin with the raw amino-acid sequence, 121 residues long: Small ribosomal subunit protein uS13 (121 aa).

The disordered stretch occupies residues 93 to 121; sequence RHLPVRGQNTKNNARTRKGPAVSIAGKKK.

This sequence belongs to the universal ribosomal protein uS13 family. Part of the 30S ribosomal subunit. Forms a loose heterodimer with protein S19. Forms two bridges to the 50S subunit in the 70S ribosome.

In terms of biological role, located at the top of the head of the 30S subunit, it contacts several helices of the 16S rRNA. In the 70S ribosome it contacts the 23S rRNA (bridge B1a) and protein L5 of the 50S subunit (bridge B1b), connecting the 2 subunits; these bridges are implicated in subunit movement. Contacts the tRNAs in the A and P-sites. This is Small ribosomal subunit protein uS13 from Ligilactobacillus salivarius (strain UCC118) (Lactobacillus salivarius).